Consider the following 782-residue polypeptide: Protein NEDD1 (782 aa).

WD repeat units lie at residues 1 to 34 (MMSNLVEPSWRLLAASGGDTVKLFDVSADSGDPC), 41 to 80 (SPGCAVNSVKWNHTNLVVASTGEDKKISLWRKNGQSLGTV), 90 to 130 (SAEE…CIKK), 133 to 172 (GHTSTITGVMYNCKDEHLASVSVGGDLIVHNLASGARATE), 176 to 216 (PNGQ…PKMS), 220 to 260 (QHSA…SSSC), 262 to 301 (AYEAPFSSLAFGDNGYILVAGTSNGRVVFYDIRGKPQPVT), and 307 to 358 (SNSE…TPSA). Disordered stretches follow at residues 350–393 (PLPS…WPSG) and 467–512 (PIFD…EAWG). Composition is skewed to polar residues over residues 352 to 362 (PSTTPSASQSA), 370 to 386 (VSASTVNASSVEQTPNR), and 488 to 498 (SFGSITPTASS). Positions 753–782 (VLSSILENQAEQMKELKLLRKENQELRQRL) form a coiled coil.

Expressed in root meristematic cells.

It localises to the nucleus envelope. Its subcellular location is the chromosome. The protein resides in the centromere. It is found in the kinetochore. The protein localises to the cytoplasm. It localises to the cytoskeleton. Its subcellular location is the phragmoplast. The protein resides in the microtubule organizing center. Its function is as follows. Regulates microtubules organization in a centrosome-independent manner. Required for the spindle to be positioned correctly and for the function of gamma-tubulin in organizing phragmoplast microtubules. Component of active gamma-tubulin ring complexes (gamma-TuRCs) associated with cortical microtubules in interphase cells. Mediates gamma-TuRC recruitment to the nucleation sites and is important for determining the ratio of branched to parallel nucleation. May mediate the localization of GCP2 and GCP3 to the nuclear envelope. In Arabidopsis thaliana (Mouse-ear cress), this protein is Protein NEDD1.